Consider the following 122-residue polypeptide: Large ribosomal subunit protein uL14 (122 aa).

It belongs to the universal ribosomal protein uL14 family. Part of the 50S ribosomal subunit. Forms a cluster with proteins L3 and L19. In the 70S ribosome, L14 and L19 interact and together make contacts with the 16S rRNA in bridges B5 and B8.

In terms of biological role, binds to 23S rRNA. Forms part of two intersubunit bridges in the 70S ribosome. In Hydrogenovibrio crunogenus (strain DSM 25203 / XCL-2) (Thiomicrospira crunogena), this protein is Large ribosomal subunit protein uL14.